Consider the following 299-residue polypeptide: Muscleblind-like protein (299 aa).

C3H1-type zinc fingers lie at residues 38-66 and 72-100; these read WLQV…HPPP and QGRV…HPPQ.

Belongs to the muscleblind family.

It is found in the nucleus. Binds to RNA with repeat sequences CUG and CCUG. This Caenorhabditis briggsae protein is Muscleblind-like protein.